Reading from the N-terminus, the 366-residue chain is Chorismate synthase (366 aa).

NADP(+) is bound at residue R47. FMN is bound by residues 124-126, G286, 301-305, and R327; these read RSS and KPVAT.

This sequence belongs to the chorismate synthase family. In terms of assembly, homotetramer. It depends on FMNH2 as a cofactor.

It carries out the reaction 5-O-(1-carboxyvinyl)-3-phosphoshikimate = chorismate + phosphate. It functions in the pathway metabolic intermediate biosynthesis; chorismate biosynthesis; chorismate from D-erythrose 4-phosphate and phosphoenolpyruvate: step 7/7. Functionally, catalyzes the anti-1,4-elimination of the C-3 phosphate and the C-6 proR hydrogen from 5-enolpyruvylshikimate-3-phosphate (EPSP) to yield chorismate, which is the branch point compound that serves as the starting substrate for the three terminal pathways of aromatic amino acid biosynthesis. This reaction introduces a second double bond into the aromatic ring system. In Methylacidiphilum infernorum (isolate V4) (Methylokorus infernorum (strain V4)), this protein is Chorismate synthase.